Here is a 316-residue protein sequence, read N- to C-terminus: Uracil-DNA glycosylase (316 aa).

Residues 36–79 (AAAAAPAGAGAGASKPARPSAAARPAKGTPAASAATTATGADAS) show a composition bias toward low complexity. Positions 36–91 (AAAAAPAGAGAGASKPARPSAAARPAKGTPAASAATTATGADASAPPPDPGAPTWD) are disordered. The active-site Proton acceptor is the D159.

This sequence belongs to the uracil-DNA glycosylase (UDG) superfamily. UNG family.

It is found in the host nucleus. It carries out the reaction Hydrolyzes single-stranded DNA or mismatched double-stranded DNA and polynucleotides, releasing free uracil.. Excises uracil residues from the DNA which can arise as a result of misincorporation of dUMP residues by DNA polymerase or deamination of cytosines. Therefore may reduce deleterious uracil incorporation into the viral genome, particularly in terminally differentiated cells which lack DNA repair enzymes. This Sus scrofa (Pig) protein is Uracil-DNA glycosylase (UL2).